Consider the following 264-residue polypeptide: MDDEVYKQRLTALNNLRIVIFFDILIILLGYIGTWNLKTLQLVNPSLWSFSPSLWIYIRGTVLCADCIFTAGSANEYSAVQNSVFQVSSLMFYGLMMEFFGYSFDRVGCMELAFISFSAACYFNIRSIKSLSLKNKNWTIISIIEIPIKLHFILNVLLFLKFSEYMLPLLGRVHLSYHLFALWVINLYIWIKLIDSKDFVLGFLAGLSVLLLNTGSLITAKPLISYFNLLTSCLIIFPSIWIYAIEKKNFKNLSYEDDDYRNYW.

The next 7 membrane-spanning stretches (helical) occupy residues 18-38 (IVIFFDILIILLGYIGTWNLK), 54-74 (LWIYIRGTVLCADCIFTAGSA), 84-104 (VFQVSSLMFYGLMMEFFGYSF), 140-160 (IISIIEIPIKLHFILNVLLFL), 174-194 (HLSYHLFALWVINLYIWIKLI), 199-219 (FVLGFLAGLSVLLLNTGSLIT), and 223-243 (LISYFNLLTSCLIIFPSIWIY).

It is found in the endoplasmic reticulum membrane. Functionally, has a role in meiosis. In Schizosaccharomyces pombe (strain 972 / ATCC 24843) (Fission yeast), this protein is Meiotically up-regulated gene 162 protein (mug162).